The sequence spans 179 residues: Large ribosomal subunit protein uL6 (179 aa).

It belongs to the universal ribosomal protein uL6 family. Part of the 50S ribosomal subunit.

Its function is as follows. This protein binds to the 23S rRNA, and is important in its secondary structure. It is located near the subunit interface in the base of the L7/L12 stalk, and near the tRNA binding site of the peptidyltransferase center. The chain is Large ribosomal subunit protein uL6 from Gloeothece citriformis (strain PCC 7424) (Cyanothece sp. (strain PCC 7424)).